Reading from the N-terminus, the 874-residue chain is Alanine--tRNA ligase (874 aa).

Zn(2+)-binding residues include H562, H566, C664, and H668.

Belongs to the class-II aminoacyl-tRNA synthetase family. It depends on Zn(2+) as a cofactor.

It localises to the cytoplasm. It catalyses the reaction tRNA(Ala) + L-alanine + ATP = L-alanyl-tRNA(Ala) + AMP + diphosphate. Functionally, catalyzes the attachment of alanine to tRNA(Ala) in a two-step reaction: alanine is first activated by ATP to form Ala-AMP and then transferred to the acceptor end of tRNA(Ala). Also edits incorrectly charged Ser-tRNA(Ala) and Gly-tRNA(Ala) via its editing domain. The sequence is that of Alanine--tRNA ligase from Neisseria meningitidis serogroup B (strain ATCC BAA-335 / MC58).